Here is a 132-residue protein sequence, read N- to C-terminus: Small ribosomal subunit protein uS8c (132 aa).

This sequence belongs to the universal ribosomal protein uS8 family. Part of the 30S ribosomal subunit.

It is found in the plastid. The protein resides in the chloroplast. One of the primary rRNA binding proteins, it binds directly to 16S rRNA central domain where it helps coordinate assembly of the platform of the 30S subunit. The polypeptide is Small ribosomal subunit protein uS8c (rps8) (Platanus occidentalis (Sycamore)).